Consider the following 86-residue polypeptide: Weak neurotoxin 5 (86 aa).

Residues 1-21 (MKTLLLTLVVVTIVCLDLGYT) form the signal peptide. 5 disulfide bridges follow: cysteine 24–cysteine 45, cysteine 27–cysteine 32, cysteine 38–cysteine 63, cysteine 67–cysteine 78, and cysteine 79–cysteine 84.

Belongs to the three-finger toxin family. Ancestral subfamily. Orphan group II sub-subfamily. As to expression, expressed by the venom gland.

The protein resides in the secreted. Functionally, binds with low affinity to muscular and very low affinity to neuronal (alpha-7/CHRNA7) nicotinic acetylcholine receptor (nAChR). The sequence is that of Weak neurotoxin 5 from Naja sputatrix (Malayan spitting cobra).